Reading from the N-terminus, the 155-residue chain is Microsomal glutathione S-transferase 1 (155 aa).

The Lumenal portion of the chain corresponds to 3-9; it reads DLKQLMD. A helical membrane pass occupies residues 10–33; that stretch reads NEVLMAFTSYATIILAKMMFLSSA. Over 34–62 the chain is Cytoplasmic; that stretch reads TAFQRLTNKVFANPEDCAGFGKGENAKKF. Arginine 38 lines the glutathione pocket. An N6-acetyllysine mark is found at lysine 42, lysine 55, and lysine 60. Residues 63-96 form a helical membrane-spanning segment; that stretch reads LRTDEKVERVRRAHLNDLENIVPFLGIGLLYSLS. Glutathione-binding residues include arginine 73, arginine 74, histidine 76, and glutamate 81. 3'-nitrotyrosine; in vitro is present on tyrosine 93. Residues 97-99 are Lumenal-facing; it reads GPD. Residues 100 to 123 traverse the membrane as a helical segment; it reads LSTALIHFRIFVGARIYHTIAYLT. Tyrosine 121 serves as a coordination point for glutathione. At 124–128 the chain is on the cytoplasmic side; it reads PLPQP. Residues 129–148 traverse the membrane as a helical segment; the sequence is NRGLAFFVGYGVTLSMAYRL. Over 149 to 155 the chain is Lumenal; sequence LRSRLYL.

This sequence belongs to the MAPEG family. Homotrimer; The trimer binds only one molecule of glutathione. In terms of processing, in vitro, peroxynitrite induces nitration at Tyr-93 which activates the enzyme. In terms of tissue distribution, highest in the liver, followed by kidney and testis and much lower in seminal vesicles, spleen, lung and brain.

It is found in the endoplasmic reticulum membrane. It localises to the mitochondrion outer membrane. It carries out the reaction RX + glutathione = an S-substituted glutathione + a halide anion + H(+). Its activity is regulated as follows. In vitro, can be activated by reagents that attack Cys-50 sulfhydryl, such as N-ethylmaleimide and via nitration of Tyr-93 by peroxynitrite. Functionally, conjugation of reduced glutathione to a wide number of exogenous and endogenous hydrophobic electrophiles. This is Microsomal glutathione S-transferase 1 (Mgst1) from Rattus norvegicus (Rat).